The chain runs to 38 residues: Histidine decarboxylase small chain (38 aa).

In terms of assembly, heterohexamer of 3 large and 3 small chains. It depends on pyruvate as a cofactor.

It catalyses the reaction L-histidine + H(+) = histamine + CO2. The protein is Histidine decarboxylase small chain of Micrococcus sp.